We begin with the raw amino-acid sequence, 198 residues long: Peptidyl-tRNA hydrolase (198 aa).

Position 15 (Tyr15) interacts with tRNA. Catalysis depends on His20, which acts as the Proton acceptor. TRNA contacts are provided by Phe66, Asn68, and Asn114.

The protein belongs to the PTH family. In terms of assembly, monomer.

Its subcellular location is the cytoplasm. It carries out the reaction an N-acyl-L-alpha-aminoacyl-tRNA + H2O = an N-acyl-L-amino acid + a tRNA + H(+). Its function is as follows. Hydrolyzes ribosome-free peptidyl-tRNAs (with 1 or more amino acids incorporated), which drop off the ribosome during protein synthesis, or as a result of ribosome stalling. Catalyzes the release of premature peptidyl moieties from peptidyl-tRNA molecules trapped in stalled 50S ribosomal subunits, and thus maintains levels of free tRNAs and 50S ribosomes. The protein is Peptidyl-tRNA hydrolase of Cupriavidus metallidurans (strain ATCC 43123 / DSM 2839 / NBRC 102507 / CH34) (Ralstonia metallidurans).